The chain runs to 264 residues: Putative hydro-lyase cgR_2449 (264 aa).

The protein belongs to the D-glutamate cyclase family.

In Corynebacterium glutamicum (strain R), this protein is Putative hydro-lyase cgR_2449.